An 838-amino-acid polypeptide reads, in one-letter code: Leucine--tRNA ligase 1 (838 aa).

Positions 40 to 51 (PYPSGAGLHVGH) match the 'HIGH' region motif. The 'KMSKS' region signature appears at 608 to 612 (KMSKS). Lys-611 contributes to the ATP binding site.

This sequence belongs to the class-I aminoacyl-tRNA synthetase family.

The protein resides in the cytoplasm. The enzyme catalyses tRNA(Leu) + L-leucine + ATP = L-leucyl-tRNA(Leu) + AMP + diphosphate. The protein is Leucine--tRNA ligase 1 of Rhizobium johnstonii (strain DSM 114642 / LMG 32736 / 3841) (Rhizobium leguminosarum bv. viciae).